Here is a 505-residue protein sequence, read N- to C-terminus: GDP-Man:Man(3)GlcNAc(2)-PP-Dol alpha-1,2-mannosyltransferase (505 aa).

Residues 1 to 3 lie on the Lumenal side of the membrane; it reads MDE. A helical membrane pass occupies residues 4–24; it reads LIMMVFVLFTIVLLLTVSMTL. Topologically, residues 25-145 are cytoplasmic; that stretch reads AALISTIVVL…KWVEASTYPR (121 aa). The helical intramembrane region spans 146–166; it reads FTLIGQSLGSMILGWEALTKF. The Cytoplasmic segment spans residues 167-402; it reads VPTIFLDSMG…VGIHTMYNEH (236 aa). The helical intramembrane region spans 403-423; sequence FGIGVVELMAAGVIPVANNSA. The Cytoplasmic portion of the chain corresponds to 424-505; sequence GPKEDIVRHE…NNNSSSKKRN (82 aa).

The protein belongs to the glycosyltransferase group 1 family.

The protein localises to the endoplasmic reticulum membrane. It catalyses the reaction an alpha-D-Man-(1-&gt;3)-[alpha-D-Man-(1-&gt;6)]-beta-D-Man-(1-&gt;4)-beta-D-GlcNAc-(1-&gt;4)-alpha-D-GlcNAc-diphospho-di-trans,poly-cis-dolichol + 2 GDP-alpha-D-mannose = an alpha-D-Man-(1-&gt;2)-alpha-D-Man-(1-&gt;2)-alpha-D-Man-(1-&gt;3)-[alpha-D-Man-(1-&gt;6)]-beta-D-Man-(1-&gt;4)-beta-D-GlcNAc-(1-&gt;4)-alpha-D-GlcNAc-diphospho-di-trans,poly-cis-dolichol + 2 GDP + 2 H(+). It functions in the pathway protein modification; protein glycosylation. GDP-Man:Man(3)GlcNAc(2)-PP-Dol alpha-1,2-mannosyltransferase that operates in the biosynthetic pathway of dolichol-linked oligosaccharides, the glycan precursors employed in protein asparagine (N)-glycosylation. The assembly of dolichol-linked oligosaccharides begins on the cytosolic side of the endoplasmic reticulum membrane and finishes in its lumen. The sequential addition of sugars to dolichol pyrophosphate produces dolichol-linked oligosaccharides containing fourteen sugars, including two GlcNAcs, nine mannoses and three glucoses. Once assembled, the oligosaccharide is transferred from the lipid to nascent proteins by oligosaccharyltransferases. Catalyzes, on the cytoplasmic face of the endoplasmic reticulum, the addition of the fourth and fifth mannose residues to the dolichol-linked oligosaccharide chain, to produce Man(5)GlcNAc(2)-PP-dolichol core oligosaccharide. This chain is GDP-Man:Man(3)GlcNAc(2)-PP-Dol alpha-1,2-mannosyltransferase (alg11), found in Dictyostelium discoideum (Social amoeba).